Consider the following 541-residue polypeptide: Propionyl-CoA carboxylase beta chain, mitochondrial (541 aa).

Residues 1 to 28 (MAAAIRIRAVAAGARLSVLNCGLGITTR) constitute a mitochondrion transit peptide. The 259-residue stretch at 34–292 (PVSVKERIDN…SSQDPAPIRE (259 aa)) folds into the CoA carboxyltransferase N-terminal domain. Positions 34–535 (PVSVKERIDN…SKKVHRPWRK (502 aa)) are carboxyltransferase. The residue at position 73 (Ser-73) is a Phosphoserine. Lys-101 bears the N6-acetyllysine; alternate mark. Position 101 is an N6-succinyllysine; alternate (Lys-101). Lys-250 is modified (N6-succinyllysine). Residues 296–535 (PSDRLVPELD…SKKVHRPWRK (240 aa)) form the CoA carboxyltransferase C-terminal domain. The acyl-CoA binding stretch occupies residues 327 to 360 (DEREFFEIMPSYAKNIVVGFARMNGRTVGIVGNQ). N6-acetyllysine; alternate occurs at positions 476 and 491. 2 positions are modified to N6-succinyllysine; alternate: Lys-476 and Lys-491.

This sequence belongs to the AccD/PCCB family. The holoenzyme is a dodecamer composed of 6 PCCA/alpha subunits and 6 PCCB/beta subunits. As to expression, broadly expressed. Most abundantly expressed in the kidney, liver, small intestine and stomach.

The protein localises to the mitochondrion matrix. It catalyses the reaction propanoyl-CoA + hydrogencarbonate + ATP = (S)-methylmalonyl-CoA + ADP + phosphate + H(+). It carries out the reaction butanoyl-CoA + hydrogencarbonate + ATP = (2S)-ethylmalonyl-CoA + ADP + phosphate + H(+). It participates in metabolic intermediate metabolism; propanoyl-CoA degradation; succinyl-CoA from propanoyl-CoA: step 1/3. Its function is as follows. This is one of the 2 subunits of the biotin-dependent propionyl-CoA carboxylase (PCC), a mitochondrial enzyme involved in the catabolism of odd chain fatty acids, branched-chain amino acids isoleucine, threonine, methionine, and valine and other metabolites. Propionyl-CoA carboxylase catalyzes the carboxylation of propionyl-CoA/propanoyl-CoA to D-methylmalonyl-CoA/(S)-methylmalonyl-CoA. Within the holoenzyme, the alpha subunit catalyzes the ATP-dependent carboxylation of the biotin carried by the biotin carboxyl carrier (BCC) domain, while the beta subunit then transfers the carboxyl group from carboxylated biotin to propionyl-CoA. Propionyl-CoA carboxylase also significantly acts on butyryl-CoA/butanoyl-CoA, which is converted to ethylmalonyl-CoA/(2S)-ethylmalonyl-CoA. Other alternative minor substrates include (2E)-butenoyl-CoA/crotonoyl-CoA. This chain is Propionyl-CoA carboxylase beta chain, mitochondrial, found in Mus musculus (Mouse).